We begin with the raw amino-acid sequence, 280 residues long: uncharacterized protein (280 aa).

Belongs to the metallo-dependent hydrolases superfamily.

This is an uncharacterized protein from Methanocaldococcus jannaschii (strain ATCC 43067 / DSM 2661 / JAL-1 / JCM 10045 / NBRC 100440) (Methanococcus jannaschii).